A 144-amino-acid chain; its full sequence is Large ribosomal subunit protein uL15 (144 aa).

Positions 1–53 are disordered; it reads MRLNTLSPAEGSKHASKRLGRGIGSGLGKTGGRGHKGQKSRSGGGVRRGFEGG. A compositionally biased stretch (gly residues) spans 21-31; sequence RGIGSGLGKTG.

It belongs to the universal ribosomal protein uL15 family. As to quaternary structure, part of the 50S ribosomal subunit.

Functionally, binds to the 23S rRNA. This chain is Large ribosomal subunit protein uL15, found in Edwardsiella ictaluri (strain 93-146).